A 506-amino-acid chain; its full sequence is Parthenolide synthase (506 aa).

The chain crosses the membrane as a helical span at residues 10–30 (LFLPTLCTILISYIIIKYVLI). Asn32, Asn63, Asn121, Asn168, and Asn175 each carry an N-linked (GlcNAc...) asparagine glycan. Residues 301–321 (LLLNVLLGAIDTTFTTIVWAM) form a helical membrane-spanning segment. Cys448 contacts heme.

This sequence belongs to the cytochrome P450 family.

The protein localises to the membrane. It catalyses the reaction (+)-costunolide + reduced [NADPH--hemoprotein reductase] + O2 = parthenolide + oxidized [NADPH--hemoprotein reductase] + H2O + H(+). It participates in secondary metabolite biosynthesis; terpenoid biosynthesis. Functionally, involved in the biosynthesis of germacrene-derived sesquiterpene lactones. Component of the parthenolide biosynthetic pathway; parthenolide and conjugates are promising anti-cancer drugs highly active against colon cancer cells. Catalyzes the conversion of costunolide to parthenolide. The polypeptide is Parthenolide synthase (Tanacetum parthenium (Feverfew)).